The primary structure comprises 239 residues: Lysophospholipase-like protein 1 (239 aa).

Alanine 2 carries the post-translational modification N-acetylalanine. Residues serine 125, aspartate 180, and histidine 212 each act as charge relay system in the active site.

The protein belongs to the AB hydrolase superfamily. AB hydrolase 2 family.

The protein localises to the cytoplasm. Its subcellular location is the cytosol. It catalyses the reaction S-hexadecanoyl-L-cysteinyl-[protein] + H2O = L-cysteinyl-[protein] + hexadecanoate + H(+). Palmitoyl thioesterase that catalyzes depalmitoylation of CGAS and KCNMA1. Acts as a regulator of innate immunity by mediating depalmitoylation of CGAS, thereby preventing CGAS homodimerization and cyclic GMP-AMP synthase activity. Does not exhibit phospholipase nor triacylglycerol lipase activity, able to hydrolyze only short chain substrates due to its shallow active site. The polypeptide is Lysophospholipase-like protein 1 (Mus musculus (Mouse)).